We begin with the raw amino-acid sequence, 293 residues long: Caspase-6 (293 aa).

The interval 1–20 (MSSEPPPRRARGPGEEQNMT) is disordered. Residues 1–23 (MSSEPPPRRARGPGEEQNMTEID) constitute a propeptide that is removed on maturation. Residues 42–44 (KRR) form a tri-arginine exosite region. Ser79 carries the phosphoserine modification. The active site involves His121. The tract at residues 125–142 (NHIYAYDAKIEIQTLTGL) is 130's region. Cys163 is an active-site residue. The propeptide occupies 180-193 (HRTDTPDANLTQVD). The residue at position 257 (Ser257) is a Phosphoserine. 2 S-palmitoyl cysteine lipidation sites follow: Cys264 and Cys277.

This sequence belongs to the peptidase C14A family. In terms of assembly, heterotetramer that consists of two anti-parallel arranged heterodimers, each one formed by a 18 kDa (p18) and a 11 kDa (p11) subunits. Interacts with BIRC6/bruce. Interacts with RIPK3. As to quaternary structure, heterotetramer that consists of two anti-parallel arranged heterodimers, each one formed by a 18 kDa (Caspase-6 subunit p18) and a 11 kDa (Caspase-6 subunit p11) subunit. Phosphorylated by NUAK1; phosphorylation inhibits self-activation. Phosphorylation at Ser-257 by AMP-activated protein kinase (PRKAA1 or PRKAA2) inhibits autocleavage, preventing caspase activation, thereby preventing hepatocyte apoptosis. In terms of processing, palmitoylation by ZDHHC17 blocks dimerization and subsequent activation, leading to inhibit the cysteine protease activity. Post-translationally, can be cleaved and activated by different caspases, depending on the context. Cleaved and activated by caspase-8 (CASP8) and subsequently by caspase-3 (CASP3). Can also undergo autoactivation by mediating autocleavage at Asp-179 and Asp-193, while it is not able to cleave its N-terminal disordered prodomain. Cleaved and activated by CASP1, possibly in the context of inflammation.

Its subcellular location is the cytoplasm. The protein localises to the nucleus. The catalysed reaction is Strict requirement for Asp at position P1 and has a preferred cleavage sequence of Val-Glu-His-Asp-|-.. During activation, the N-terminal disordered prodomain is removed by cleavage. Concomitantly, double cleavage gives rise to a large 18-kDa and a small 11-kDa subunit. The two large and two small subunits then assemble to form the active CASP6 complex. Can be cleaved and activated by different caspases, depending on the context. Cleaved and activated by caspase-8 (CASP8) and subsequently by caspase-3 (CASP3). Can also undergo autoactivation by mediating autocleavage at Asp-179 and Asp-193, while it is not able to cleave its N-terminal disordered prodomain. Intramolecular cleavage at Asp-193 is a prerequisite for CASP6 self-activation. Cleaved and activated by CASP1 in neurons, possibly in the context of inflammation. Phosphorylation at Ser-257 inhibits autocleavage, preventing caspase activation. In terms of biological role, cysteine protease that plays essential roles in programmed cell death, axonal degeneration, development and innate immunity. Acts as a non-canonical executioner caspase during apoptosis: localizes in the nucleus and cleaves the nuclear structural protein NUMA1 and lamin A/LMNA thereby inducing nuclear shrinkage and fragmentation. Lamin-A/LMNA cleavage is required for chromatin condensation and nuclear disassembly during apoptotic execution. Acts as a regulator of liver damage by promoting hepatocyte apoptosis: in absence of phosphorylation by AMP-activated protein kinase (AMPK), catalyzes cleavage of BID, leading to cytochrome c release, thereby participating in nonalcoholic steatohepatitis. Cleaves PARK7/DJ-1 in cells undergoing apoptosis. Involved in intrinsic apoptosis by mediating cleavage of RIPK1. Furthermore, cleaves many transcription factors such as NF-kappa-B and cAMP response element-binding protein/CREBBP. Cleaves phospholipid scramblase proteins XKR4 and XKR9. In addition to apoptosis, involved in different forms of programmed cell death. Plays an essential role in defense against viruses by acting as a central mediator of the ZBP1-mediated pyroptosis, apoptosis, and necroptosis (PANoptosis), independently of its cysteine protease activity. PANoptosis is a unique inflammatory programmed cell death, which provides a molecular scaffold that allows the interactions and activation of machinery required for inflammasome/pyroptosis, apoptosis and necroptosis. Mechanistically, interacts with RIPK3 and enhances the interaction between RIPK3 and ZBP1, leading to ZBP1-mediated inflammasome activation and cell death. Plays an essential role in axon degeneration during axon pruning which is the remodeling of axons during neurogenesis but not apoptosis. Regulates B-cell programs both during early development and after antigen stimulation. This Bos taurus (Bovine) protein is Caspase-6.